Consider the following 449-residue polypeptide: UPF0761 membrane protein Cpha266_1653 (449 aa).

A run of 6 helical transmembrane segments spans residues Leu77 to Phe97, Ser133 to Ile153, Phe173 to Ala193, Leu214 to Val234, Ala244 to Phe264, and Gly277 to Leu297.

The protein belongs to the UPF0761 family.

It is found in the cell inner membrane. The sequence is that of UPF0761 membrane protein Cpha266_1653 from Chlorobium phaeobacteroides (strain DSM 266 / SMG 266 / 2430).